Consider the following 441-residue polypeptide: Cysteine--tRNA ligase (441 aa).

C24 lines the Zn(2+) pocket. The 'HIGH' region motif lies at 26 to 36 (PTVYNYIHIGN). Zn(2+) contacts are provided by C204, H230, and E234. The 'KMSKS' region motif lies at 262-266 (KMSKS). Residue K265 coordinates ATP.

The protein belongs to the class-I aminoacyl-tRNA synthetase family. In terms of assembly, monomer. Requires Zn(2+) as cofactor.

It is found in the cytoplasm. It catalyses the reaction tRNA(Cys) + L-cysteine + ATP = L-cysteinyl-tRNA(Cys) + AMP + diphosphate. The sequence is that of Cysteine--tRNA ligase from Mycoplasma mycoides subsp. mycoides SC (strain CCUG 32753 / NCTC 10114 / PG1).